Consider the following 154-residue polypeptide: 3-hydroxyacyl-[acyl-carrier-protein] dehydratase FabZ (154 aa).

His-54 is an active-site residue.

Belongs to the thioester dehydratase family. FabZ subfamily.

The protein localises to the cytoplasm. The catalysed reaction is a (3R)-hydroxyacyl-[ACP] = a (2E)-enoyl-[ACP] + H2O. Its function is as follows. Involved in unsaturated fatty acids biosynthesis. Catalyzes the dehydration of short chain beta-hydroxyacyl-ACPs and long chain saturated and unsaturated beta-hydroxyacyl-ACPs. This is 3-hydroxyacyl-[acyl-carrier-protein] dehydratase FabZ from Shewanella sp. (strain MR-4).